The following is a 98-amino-acid chain: Integration host factor subunit alpha (98 aa).

The disordered stretch occupies residues 49-72 (FGNFDLRDKNQRPGRNPKTGEDIP).

This sequence belongs to the bacterial histone-like protein family. Heterodimer of an alpha and a beta chain.

Its function is as follows. This protein is one of the two subunits of integration host factor, a specific DNA-binding protein that functions in genetic recombination as well as in transcriptional and translational control. In Shewanella loihica (strain ATCC BAA-1088 / PV-4), this protein is Integration host factor subunit alpha.